Reading from the N-terminus, the 172-residue chain is MKACERLLLKIESQEKFVEEFKRILLELGLTLKEFSEISGIPYSTLYKVIQGKDFRVSTLIKILKTIRSFEKDENIDTIAIIAARPALNKITTRKIGINGKSYLIKEYPANSLEECIVAAVRAEREGVKGIVCAPIVSATIEKIVNVPVAVIIPEKDAFMKALEIIAKKINE.

An HTH cro/C1-type domain is found at 21–75; sequence FKRILLELGLTLKEFSEISGIPYSTLYKVIQGKDFRVSTLIKILKTIRSFEKDEN. A DNA-binding region (H-T-H motif) is located at residues 32–51; that stretch reads LKEFSEISGIPYSTLYKVIQ.

This is an uncharacterized protein from Methanocaldococcus jannaschii (strain ATCC 43067 / DSM 2661 / JAL-1 / JCM 10045 / NBRC 100440) (Methanococcus jannaschii).